The primary structure comprises 797 residues: Adhesion G-protein coupled receptor G7 (797 aa).

A signal peptide spans 1–26 (MASCRAWNLRVLVAVVCGLLTGIILG). The Extracellular segment spans residues 27-438 (LGIWRIVIRI…QYPKSLDILS (412 aa)). 9 N-linked (GlcNAc...) asparagine glycosylation sites follow: asparagine 82, asparagine 159, asparagine 178, asparagine 191, asparagine 247, asparagine 261, asparagine 312, asparagine 316, and asparagine 387. Residues 275-428 (FSVQKGASSS…AVLMTFKKDY (154 aa)) form the GAIN-B domain. 2 disulfide bridges follow: cysteine 383-cysteine 410 and cysteine 398-cysteine 412. The tract at residues 383–428 (CVYWNLSAKDWDTYGCQKDKGTDGFLRCRCNHTTNFAVLMTFKKDY) is GPS. Asparagine 413 carries N-linked (GlcNAc...) asparagine glycosylation. A helical membrane pass occupies residues 439–459 (NVGCALSVTGLALTVIFQIVT). The Cytoplasmic segment spans residues 460-468 (RKVRKTSVT). Residues 469 to 489 (WVLVNLCISMLIFNLLFVFGI) traverse the membrane as a helical segment. Topologically, residues 490–528 (ENSNKNLQTSDGDINNIDFDNNDIPRTDTINIPNPMCTA) are extracellular. Residues 529–549 (IAALLHYFLLVTFTWNALSAA) form a helical membrane-spanning segment. The Cytoplasmic portion of the chain corresponds to 550–565 (QLYYLLIRTMKPLPRH). A helical membrane pass occupies residues 566 to 586 (FILFISLIGWGVPAIVVAITV). Over 587 to 623 (GVIYSQNGNNPQWELDYRQEKICWLAIPEPNGVIKSP) the chain is Extracellular. Residues 624–644 (LLWSFIVPVTIILISNVVMFI) traverse the membrane as a helical segment. Residues 645-669 (TISIKVLWKNNQNLTSTKKVSSMKK) are Cytoplasmic-facing. The chain crosses the membrane as a helical span at residues 670–690 (IVSTLSVAVVFGITWILAYLM). Over 691 to 698 (LVNDDSIR) the chain is Extracellular. A helical transmembrane segment spans residues 699–719 (IVFSYIFCLFNTTQGLQIFIL). At 720–797 (YTVRTKVFQS…SESDNAKESI (78 aa)) the chain is on the cytoplasmic side.

It belongs to the G-protein coupled receptor 2 family. Adhesion G-protein coupled receptor (ADGR) subfamily.

It is found in the membrane. Its function is as follows. Orphan receptor. The sequence is that of Adhesion G-protein coupled receptor G7 (ADGRG7) from Homo sapiens (Human).